Consider the following 990-residue polypeptide: MEEKTHHHHHSTNKHIPSSKSRTPLLHKPYHHHVQTNPPPFLLHPSSHQNLNLVASNLPSSYYYYYYCYFYSQFHNSLPPPPPPHLLPLSPPLPPLLPLPPPHSMTRFHKSLPVSQVVERKQQHQQKKKIQVSNNKVSGSIAIEEAALVVAKRPDFGGQDGSVIYLLANHFLVKFDSSQRIYHYNVEISPQPSKEIARMIKQKLVETDRNSFSGVVPAFDGRQNIYSPVEFQGDRLEFFVNLPIPSCKAVMNYGDLREKQPQKKIEKLFRVNMKLVSKFDGKEQRKEGEDWAPLPPEYIHALDVILRENPMEKCTSIGRSFYSSSMGGSKEIGGGAVGLRGFFQSLRHTQQGLALNMDLSITAFHESIGVIAYLQKRLEFLTDLPRNKGRELSLEEKREVEKALKNIRVFVCHRETVQRYRVYGLTEEITENIWFPDREGKYLRLMSYFKDHYGYEIQFKNLPCLQISRARPCYLPMELCMICEGQKFLGKLSDDQAAKIMKMGCQKPNERKAIIDKVMTGSVGPSSGNQTREFNLEVSREMTLLKGRILQPPKLKLDRPRNLKESKVFKGTRIERWALMSIGGSSDQKSTIPKFINELTQKCEHLGVFLSKNTLSSTFFEPSHILNNISLLESKLKEIQRAASNNLQLIICVMEKKHKGYGDLKRISETRIGVVTQCCLYPNITKLSSQFVSNLALKINAKIGGSMTELYNSIPSHIPRLLRPDEPVIFMGADVTHPHPFDDCSPSVAAVVGSINWPEANRYVSRMRSQTHRQEIIQDLDLMVKELLDDFYKAVKKLPNRIIFFRDGVSETQFKKVLQEELQSIKTACSKFQDYNPSITFAVVQKRHHTRLFRCDPDHENIPPGTVVDTVITHPKEFDFYLCSHLGVKGTSRPTHYHILWDENEFTSDELQRLVYNLCYTFVRCTKPISIVPPAYYAHLAAYRGRLYIERSSESNGGSMNPSSVSRVGPPKTIPLPKLSDNVKNLMFYC.

A compositionally biased stretch (basic residues) spans 1–13; it reads MEEKTHHHHHSTN. Residues 1 to 25 are disordered; that stretch reads MEEKTHHHHHSTNKHIPSSKSRTPL. A PAZ domain is found at 379 to 484; sequence EFLTDLPRNK…LPMELCMICE (106 aa). One can recognise a Piwi domain in the interval 649–950; sequence LIICVMEKKH…AAYRGRLYIE (302 aa). The disordered stretch occupies residues 953–973; the sequence is SESNGGSMNPSSVSRVGPPKT. A compositionally biased stretch (polar residues) spans 954–966; sequence ESNGGSMNPSSVS.

This sequence belongs to the argonaute family. Ago subfamily. Expressed in leaves and floral buds, and at low levels in roots.

Its function is as follows. Involved in RNA-mediated post-transcriptional gene silencing (PTGS). Main component of the RNA-induced silencing complex (RISC) that binds to a short guide RNA such as a microRNA (miRNA) or small interfering RNA (siRNA). RISC uses the mature miRNA or siRNA as a guide for slicer-directed cleavage of homologous mRNAs to repress gene expression. Required for the processing of 21 nucleotide trans-acting siRNAs (ta-siRNAs) derived from TAS3a transcripts. Associates preferentially with the microRNA (miRNA) miR390 which guides the cleavage of TAS3 precursor RNA. Seems to act as miR390 specific slicer. Associates mainly with small RNAs of 21 nucleotide in length and with a 5' terminal adenosine. Acts in the RDR6/SGS3/DCL4/AGO7 trans-acting siRNA pathway involved in leaf developmental timing. Does not seem to act on leaf polarity. Required for the production of the 30-40nt bacterial-induced long siRNAs (lsiRNA). Involved in antiviral RNA silencing by contributing to efficient viral RNAs clearance. Targets less structured viral RNAs than AGO1 which is capable of targeting RNAs with more compact structures. In Arabidopsis thaliana (Mouse-ear cress), this protein is Protein argonaute 7 (AGO7).